The following is a 479-amino-acid chain: Aspartyl/glutamyl-tRNA(Asn/Gln) amidotransferase subunit B (479 aa).

It belongs to the GatB/GatE family. GatB subfamily. In terms of assembly, heterotrimer of A, B and C subunits.

The catalysed reaction is L-glutamyl-tRNA(Gln) + L-glutamine + ATP + H2O = L-glutaminyl-tRNA(Gln) + L-glutamate + ADP + phosphate + H(+). The enzyme catalyses L-aspartyl-tRNA(Asn) + L-glutamine + ATP + H2O = L-asparaginyl-tRNA(Asn) + L-glutamate + ADP + phosphate + 2 H(+). Its function is as follows. Allows the formation of correctly charged Asn-tRNA(Asn) or Gln-tRNA(Gln) through the transamidation of misacylated Asp-tRNA(Asn) or Glu-tRNA(Gln) in organisms which lack either or both of asparaginyl-tRNA or glutaminyl-tRNA synthetases. The reaction takes place in the presence of glutamine and ATP through an activated phospho-Asp-tRNA(Asn) or phospho-Glu-tRNA(Gln). The sequence is that of Aspartyl/glutamyl-tRNA(Asn/Gln) amidotransferase subunit B from Alcanivorax borkumensis (strain ATCC 700651 / DSM 11573 / NCIMB 13689 / SK2).